A 397-amino-acid polypeptide reads, in one-letter code: Major outer membrane porin, serovar H (397 aa).

The signal sequence occupies residues 1-22; that stretch reads MKKLLKSVLVFAALSSASSLQA.

Belongs to the chlamydial porin (CP) (TC 1.B.2) family. As to quaternary structure, part of a disulfide cross-linked outer membrane complex (COMC) composed of the major outer membrane porin (MOMP), the small cysteine-rich protein (OmcA) and the large cysteine-rich periplasmic protein (OmcB).

Its subcellular location is the cell outer membrane. Functionally, in elementary bodies (EBs, the infectious stage, which is able to survive outside the host cell) provides the structural integrity of the outer envelope through disulfide cross-links with the small cysteine-rich protein and the large cysteine-rich periplasmic protein. It has been described in publications as the Sarkosyl-insoluble COMC (Chlamydia outer membrane complex), and serves as the functional equivalent of peptidoglycan. In terms of biological role, permits diffusion of specific solutes through the outer membrane. The protein is Major outer membrane porin, serovar H (ompA) of Chlamydia trachomatis.